A 76-amino-acid polypeptide reads, in one-letter code: Theta defensin subunit C (76 aa).

The signal sequence occupies residues 1 to 22 (MRTFAFLTAMLLLVALHAQAEA). Positions 23–64 (RQARADEAAIQEQPGADDQGMAHSFTRNESAVLPLSESERGL) are excised as a propeptide. Arginine 65 participates in a covalent cross-link: Cyclopeptide (Arg-Cys) (interchain with C-73 in subunit A); in form BTD-4. Cysteine 68 and cysteine 73 are disulfide-bonded. Cysteine 73 participates in a covalent cross-link: Cyclopeptide (Cys-Arg) (interchain with R-65 in subunit A); in form BTD-4. Residues 74 to 76 (RLL) constitute a propeptide that is removed on maturation.

Belongs to the alpha-defensin family. Theta subfamily. BTD-4 is a cyclic heterodimer composed of subunits A and C; disulfide-linked. Post-translationally, forms a cyclic peptide with subunit A (BTD-4). An additional intersubunit disulfide bond is formed.

In terms of biological role, BTD-4 has antimicrobial activity against the Gram-negative bacterium E.coli ML35, the Gram-positive bacterium S.aureus 502a, and the fungus C.albicans 16820. In Papio anubis (Olive baboon), this protein is Theta defensin subunit C (BTDC).